Consider the following 1058-residue polypeptide: Probable plasma membrane ATPase (1058 aa).

Polar residues predominate over residues 1–29; sequence MDNNQIPKNSPESSAINSAESSPKSNVSS. The disordered stretch occupies residues 1-123; the sequence is MDNNQIPKNS…SSSGKKEEDY (123 aa). Topologically, residues 1–212 are cytoplasmic; it reads MDNNQIPKNS…DVKRYPILEF (212 aa). The span at 31–40 shows a compositional bias: basic and acidic residues; the sequence is VLHENHHKEQ. A compositionally biased stretch (low complexity) spans 41-66; it reads QQLQQQLQQEQQQQQLPTTPQSEPTQ. The segment covering 96–111 has biased composition (polar residues); it reads SLKTISGYPSSKNTEA. Residues 213 to 232 traverse the membrane as a helical segment; that stretch reads LYFMWNPLSWTMEVAAIVSI. Residues 233–237 are Extracellular-facing; sequence ALLDW. A helical transmembrane segment spans residues 238-258; the sequence is VDFILICALLLLNATIGFIEE. Over 259-387 the chain is Cytoplasmic; the sequence is NTAGNAVEAL…GHLQVILRNI (129 aa). The helical transmembrane segment at 388–407 threads the bilayer; it reads GLFCISFIAIWVLVELLVDF. Residues 408–425 lie on the Extracellular side of the membrane; sequence LGYDGYCHGVGGGRCLPL. A helical membrane pass occupies residues 426–447; it reads NNALVLLVGGIPIAMPTVLSVT. The Cytoplasmic portion of the chain corresponds to 448-783; sequence MAIGATQLSK…SSRKIFQRMR (336 aa). Aspartate 480 serves as the catalytic 4-aspartylphosphate intermediate. Mg(2+) is bound by residues aspartate 728 and aspartate 732. A helical membrane pass occupies residues 784–805; that stretch reads NYVIYSVAATVRICTTFGILTV. Topologically, residues 806–810 are extracellular; it reads AWNFK. The chain crosses the membrane as a helical span at residues 811-833; that stretch reads FPTIATVIIAILNDGTMLTISKD. Residues 834–849 are Cytoplasmic-facing; sequence RVRARNEPDQWNLFEV. A helical membrane pass occupies residues 850–870; that stretch reads FTMALCYGFYLVGSTIVFFAI. Topologically, residues 871-889 are extracellular; sequence IHDGTWFHDAINLRILTDN. Residues 890–910 form a helical membrane-spanning segment; that stretch reads ELRGLIYLQVSISGLATIFVS. Over 911–922 the chain is Cytoplasmic; the sequence is RSQGFSYFERPG. Residues 923–943 traverse the membrane as a helical segment; that stretch reads NLVIFAFVMSQIVATFIGVYG. The Extracellular portion of the chain corresponds to 944-967; that stretch reads FRGYPHDSFSDNPDYPVHGTNFQG. A helical transmembrane segment spans residues 968-988; it reads CGWGWAVCAWIWCFLWYIPMD. Topologically, residues 989–1058 are cytoplasmic; that stretch reads FIKLGVTYIL…HKSVVTDNKV (70 aa).

The protein belongs to the cation transport ATPase (P-type) (TC 3.A.3) family. Type IIIA subfamily.

It is found in the cell membrane. The catalysed reaction is ATP + H2O + H(+)(in) = ADP + phosphate + 2 H(+)(out). With respect to regulation, acid pH levels increase its ATPase activity. In terms of biological role, P-type plasma membrane H+-ATPase (proton pump). The proton gradient it generates drives the active transport of nutrients by H(+) symport. The resulting external acidification and/or internal alkinization may mediate growth responses. The polypeptide is Probable plasma membrane ATPase (patB) (Dictyostelium discoideum (Social amoeba)).